We begin with the raw amino-acid sequence, 214 residues long: Heat shock protein 30 (214 aa).

A sHSP domain is found at 66-183; sequence VPSSLTIQPV…AERVVPINCS (118 aa). A disordered region spans residues 193–214; sequence SKTEGSITDTQKKQENTISKED. A compositionally biased stretch (basic and acidic residues) spans 202 to 214; it reads TQKKQENTISKED.

It belongs to the small heat shock protein (HSP20) family.

In Oncorhynchus tshawytscha (Chinook salmon), this protein is Heat shock protein 30 (hsp30).